Consider the following 679-residue polypeptide: tRNA uridine 5-carboxymethylaminomethyl modification enzyme MnmG (679 aa).

13 to 18 lines the FAD pocket; sequence GGGHAG. Residue 280 to 294 coordinates NAD(+); sequence GPRYCPSVEDKINRF.

This sequence belongs to the MnmG family. Homodimer. Heterotetramer of two MnmE and two MnmG subunits. It depends on FAD as a cofactor.

The protein resides in the cytoplasm. NAD-binding protein involved in the addition of a carboxymethylaminomethyl (cmnm) group at the wobble position (U34) of certain tRNAs, forming tRNA-cmnm(5)s(2)U34. The polypeptide is tRNA uridine 5-carboxymethylaminomethyl modification enzyme MnmG (Albidiferax ferrireducens (strain ATCC BAA-621 / DSM 15236 / T118) (Rhodoferax ferrireducens)).